We begin with the raw amino-acid sequence, 177 residues long: Dynein light chain Tctex-type 5-A (177 aa).

The protein belongs to the dynein light chain Tctex-type family.

The polypeptide is Dynein light chain Tctex-type 5-A (Dynlt5-a) (Xenopus laevis (African clawed frog)).